We begin with the raw amino-acid sequence, 329 residues long: Peroxidase 5 (329 aa).

Positions M1 to A26 are cleaved as a signal peptide. Q27 is modified (pyrrolidone carboxylic acid). Disulfide bonds link C37-C117, C70-C75, C123-C324, and C202-C234. H68 (proton acceptor) is an active-site residue. Ca(2+) is bound by residues D69, V72, G74, D76, and S78. P165 contacts substrate. Residue H195 participates in heme b binding. T196 lines the Ca(2+) pocket. A glycan (N-linked (GlcNAc...) asparagine) is linked at N213. Ca(2+)-binding residues include S251 and D256.

Belongs to the peroxidase family. Classical plant (class III) peroxidase subfamily. Requires heme b as cofactor. Ca(2+) serves as cofactor.

Its subcellular location is the secreted. The enzyme catalyses 2 a phenolic donor + H2O2 = 2 a phenolic radical donor + 2 H2O. Removal of H(2)O(2), oxidation of toxic reductants, biosynthesis and degradation of lignin, suberization, auxin catabolism, response to environmental stresses such as wounding, pathogen attack and oxidative stress. These functions might be dependent on each isozyme/isoform in each plant tissue. The polypeptide is Peroxidase 5 (Vitis vinifera (Grape)).